The following is a 328-amino-acid chain: Nodulation protein Z (328 aa).

One can recognise a GT23 domain in the interval 6-317 (CPEGRSVISR…FDLARGVFCQ (312 aa)).

This sequence belongs to the glycosyltransferase 23 family.

In terms of biological role, fucosyltransferase which adds the fucose moiety of the nod factor on its terminal reducing N-acetylglucosamine end. Uses GDP-fucose as the donor group. This is Nodulation protein Z (nodZ) from Azorhizobium caulinodans (strain ATCC 43989 / DSM 5975 / JCM 20966 / LMG 6465 / NBRC 14845 / NCIMB 13405 / ORS 571).